Consider the following 45-residue polypeptide: Parabutoporin (45 aa).

As to quaternary structure, monomer and homodimer. Expressed by the venom gland.

It is found in the secreted. The protein resides in the target cell membrane. In terms of biological role, at high concentrations, acts as a pore former in cellular membranes and causes the leakage of the cells. At submicromolar concentrations, degranulates granulocytes and has a weak hemolytic activity against human red blood cells. Also strongly inhibits the production of superoxide anions. Has a strong antibacterial activity against Gram-negative bacteria but is less active against Gram-positive bacteria. Also has antifungal activity. Induces reversible G-protein dependent Ca(2+) release from intracellular stores and increase Ca(2+) influx in HL-60 cells. Induces the activation of the Rac pathway in granulocytes. Synergistically enhances the excitatory effects of short and long chain ion-channel-specific neurotoxins by interaction with the neuronal membranes. The sequence is that of Parabutoporin from Parabuthus schlechteri (Scorpion).